Consider the following 104-residue polypeptide: UPF0125 protein PSPTO_4512 (104 aa).

Belongs to the UPF0125 (RnfH) family.

The protein is UPF0125 protein PSPTO_4512 of Pseudomonas syringae pv. tomato (strain ATCC BAA-871 / DC3000).